A 241-amino-acid polypeptide reads, in one-letter code: Glutathione S-transferase omega-1 (241 aa).

S2 bears the N-acetylserine mark. Positions 22–101 (GSIRIYSMRF…YLDEAYPGKK (80 aa)) constitute a GST N-terminal domain. Catalysis depends on C32, which acts as the Nucleophile. The residue at position 57 (K57) is an N6-acetyllysine. Glutathione-binding positions include K59, V72, and 85–86 (ES). The GST C-terminal domain occupies 106–230 (DPYEKACQKM…DWQGFLELYL (125 aa)). S129 is subject to Phosphoserine. K143, K148, and K152 each carry N6-acetyllysine.

Belongs to the GST superfamily. Omega family. In terms of assembly, homodimer. In terms of tissue distribution, ubiquitous. Highest expression in liver, pancreas, skeletal muscle, spleen, thymus, colon, blood leukocyte and heart. Lowest expression in brain, placenta and lung.

The protein resides in the cytoplasm. It localises to the cytosol. The enzyme catalyses RX + glutathione = an S-substituted glutathione + a halide anion + H(+). It carries out the reaction L-dehydroascorbate + 2 glutathione = glutathione disulfide + L-ascorbate. It catalyses the reaction methylarsonate + 2 glutathione + H(+) = methylarsonous acid + glutathione disulfide + H2O. Its activity is regulated as follows. Monomethylarsonic acid reductase activity is competitively inhibited by 1-chloro 2,4-dinitrobenzene (CDNB) and by deoxycholate. Functionally, exhibits glutathione-dependent thiol transferase and dehydroascorbate reductase activities. Has S-(phenacyl)glutathione reductase activity. Also has glutathione S-transferase activity. Participates in the biotransformation of inorganic arsenic and reduces monomethylarsonic acid (MMA) and dimethylarsonic acid. The sequence is that of Glutathione S-transferase omega-1 (GSTO1) from Homo sapiens (Human).